The primary structure comprises 408 residues: GTPase Obg (408 aa).

One can recognise an Obg domain in the interval 1 to 159 (MKFVDEVSIR…RDLKMEMKVL (159 aa)). The tract at residues 127 to 150 (NTRFKSSTNRAPRQTTPGKPGDQR) is disordered. Residues 129–143 (RFKSSTNRAPRQTTP) show a composition bias toward polar residues. The OBG-type G domain maps to 160–333 (ADVGLLGLPN…LSHDLMRYLE (174 aa)). Residues 166-173 (GLPNAGKS), 191-195 (FTTLV), 213-216 (DIPG), 283-286 (NKSD), and 314-316 (SAI) each bind GTP. Mg(2+) is bound by residues Ser-173 and Thr-193. The interval 382-408 (HDIGDDDGWDDDFEDDEDGPEIIYVRD) is disordered. Positions 385-401 (GDDDGWDDDFEDDEDGP) are enriched in acidic residues.

The protein belongs to the TRAFAC class OBG-HflX-like GTPase superfamily. OBG GTPase family. As to quaternary structure, monomer. The cofactor is Mg(2+).

It localises to the cytoplasm. Functionally, an essential GTPase which binds GTP, GDP and possibly (p)ppGpp with moderate affinity, with high nucleotide exchange rates and a fairly low GTP hydrolysis rate. Plays a role in control of the cell cycle, stress response, ribosome biogenesis and in those bacteria that undergo differentiation, in morphogenesis control. This chain is GTPase Obg, found in Pseudomonas putida (strain GB-1).